The chain runs to 103 residues: NAD(P)H-quinone oxidoreductase subunit 4L (103 aa).

A run of 3 helical transmembrane segments spans residues 5-25, 32-52, and 66-86; these read LQYC…GLIT, VLMS…GFSN, and IFVI…VLAI.

The protein belongs to the complex I subunit 4L family. As to quaternary structure, NDH-1 can be composed of about 15 different subunits; different subcomplexes with different compositions have been identified which probably have different functions.

It localises to the cellular thylakoid membrane. The catalysed reaction is a plastoquinone + NADH + (n+1) H(+)(in) = a plastoquinol + NAD(+) + n H(+)(out). It carries out the reaction a plastoquinone + NADPH + (n+1) H(+)(in) = a plastoquinol + NADP(+) + n H(+)(out). Functionally, NDH-1 shuttles electrons from an unknown electron donor, via FMN and iron-sulfur (Fe-S) centers, to quinones in the respiratory and/or the photosynthetic chain. The immediate electron acceptor for the enzyme in this species is believed to be plastoquinone. Couples the redox reaction to proton translocation, and thus conserves the redox energy in a proton gradient. Cyanobacterial NDH-1 also plays a role in inorganic carbon-concentration. In Synechocystis sp. (strain ATCC 27184 / PCC 6803 / Kazusa), this protein is NAD(P)H-quinone oxidoreductase subunit 4L.